A 126-amino-acid polypeptide reads, in one-letter code: MYYPLLSIALGSVLGAWLRWLLGLKLNPIYPQIPLGTVTVNLAGGFIIGFAMAYFAHSDLSPNYKLFVITGFCGALTTFSTFSIEIVTLLQSGKWGMAMLAISIHLIGSLIFTCLGLATYYWVAGN.

4 helical membrane passes run 4-24 (PLLS…LLGL), 33-53 (IPLG…FAMA), 67-87 (FVIT…IEIV), and 97-117 (MAML…CLGL). Na(+) is bound by residues Gly-74 and Thr-77.

This sequence belongs to the fluoride channel Fluc/FEX (TC 1.A.43) family.

The protein localises to the cell inner membrane. The enzyme catalyses fluoride(in) = fluoride(out). Na(+) is not transported, but it plays an essential structural role and its presence is essential for fluoride channel function. Functionally, fluoride-specific ion channel. Important for reducing fluoride concentration in the cell, thus reducing its toxicity. The polypeptide is Fluoride-specific ion channel FluC (Acinetobacter baumannii (strain ACICU)).